A 368-amino-acid chain; its full sequence is Cytochrome b (368 aa).

The next 4 helical transmembrane spans lie at Phe32–Phe52, Trp76–Thr98, Ala112–Val132, and Phe174–Phe194. Heme b contacts are provided by His82 and His96. His178 and His192 together coordinate heme b. Residue His197 participates in a ubiquinone binding. The next 4 membrane-spanning stretches (helical) occupy residues Met219–Ala239, Gly285–Leu305, Gly323–Pro343, and Tyr347–Leu367.

This sequence belongs to the cytochrome b family. The main subunits of complex b-c1 are: cytochrome b, cytochrome c1 and the Rieske protein. Heme b is required as a cofactor.

The protein resides in the mitochondrion inner membrane. Its function is as follows. Component of the ubiquinol-cytochrome c reductase complex (complex III or cytochrome b-c1 complex) that is part of the mitochondrial respiratory chain. The b-c1 complex mediates electron transfer from ubiquinol to cytochrome c. Contributes to the generation of a proton gradient across the mitochondrial membrane that is then used for ATP synthesis. In Toxoplasma gondii, this protein is Cytochrome b (MT-CYB).